The following is a 481-amino-acid chain: uncharacterized protein (481 aa).

10 helical membrane-spanning segments follow: residues 30 to 50 (TIII…FVQF), 96 to 116 (AIAL…FIGM), 154 to 174 (CMAV…FNSV), 196 to 216 (ISLV…IAII), 220 to 240 (LVPM…GMHI), 250 to 270 (IVQS…ALVS), 311 to 331 (MLGV…IILL), 354 to 374 (IGEF…YSSI), 391 to 411 (KPWL…FGAV), and 424 to 444 (VMAV…PIVW).

It belongs to the alanine or glycine:cation symporter (AGCS) (TC 2.A.25) family.

It localises to the cell inner membrane. This is an uncharacterized protein from Haemophilus influenzae (strain ATCC 51907 / DSM 11121 / KW20 / Rd).